A 288-amino-acid chain; its full sequence is 33 kDa chaperonin (288 aa).

Intrachain disulfides connect Cys236–Cys238 and Cys269–Cys272.

The protein belongs to the HSP33 family. Under oxidizing conditions two disulfide bonds are formed involving the reactive cysteines. Under reducing conditions zinc is bound to the reactive cysteines and the protein is inactive.

Its subcellular location is the cytoplasm. Functionally, redox regulated molecular chaperone. Protects both thermally unfolding and oxidatively damaged proteins from irreversible aggregation. Plays an important role in the bacterial defense system toward oxidative stress. This Syntrophotalea carbinolica (strain DSM 2380 / NBRC 103641 / GraBd1) (Pelobacter carbinolicus) protein is 33 kDa chaperonin.